The chain runs to 698 residues: Topoisomerase subunit TopoN (698 aa).

Lys429 is covalently cross-linked (Isoglutamyl lysine isopeptide (Lys-Gln) (interchain with Q-Cter in protein Pup)). The interval 443–473 (GAKARARAASKAKGLGTNLSLPPKLLPSRES) is disordered. Residues 479–593 (AELFLCEGDS…AGMVYVTMPP (115 aa)) enclose the Toprim domain.

This sequence belongs to the type II topoisomerase family. As to quaternary structure, a complex of TopoN and TopoM, possibly a heterotetramer. Mg(2+) is required as a cofactor.

The enzyme catalyses ATP-dependent breakage, passage and rejoining of double-stranded DNA.. With respect to regulation, inhibited by quinolone antibiotic ciprofloxacin and coumarin antibiotic novobiocin, but at much higher concentrations than is usual for DNA gyrase/topoisomerase. Catalyzes the relaxation of negatively supercoiled DNA in the presence of ATP or dATP but not other nucleotides. Individual subunits have no activity. Not able to negatively supercoil DNA, it can however introduce positive supercoils in DNA. Relaxes positive supercoils in an ATP-dependent manner. Catenates and decatenates DNA. Generates dsDNA breaks in the presence of the quinolone antibiotic ciprofloxacin, showing it is a topoisomerase. This is Topoisomerase subunit TopoN from Mycolicibacterium smegmatis (strain ATCC 700084 / mc(2)155) (Mycobacterium smegmatis).